A 507-amino-acid polypeptide reads, in one-letter code: ATP synthase subunit alpha, chloroplastic (507 aa).

Gly170–Thr177 is a binding site for ATP.

The protein belongs to the ATPase alpha/beta chains family. In terms of assembly, F-type ATPases have 2 components, CF(1) - the catalytic core - and CF(0) - the membrane proton channel. CF(1) has five subunits: alpha(3), beta(3), gamma(1), delta(1), epsilon(1). CF(0) has four main subunits: a, b, b' and c.

The protein localises to the plastid. It is found in the chloroplast thylakoid membrane. It carries out the reaction ATP + H2O + 4 H(+)(in) = ADP + phosphate + 5 H(+)(out). Functionally, produces ATP from ADP in the presence of a proton gradient across the membrane. The alpha chain is a regulatory subunit. The protein is ATP synthase subunit alpha, chloroplastic of Marchantia polymorpha (Common liverwort).